The chain runs to 193 residues: Peptidyl-tRNA hydrolase (193 aa).

A tRNA-binding site is contributed by Tyr-14. Catalysis depends on His-19, which acts as the Proton acceptor. Phe-64, Asn-66, and Asn-112 together coordinate tRNA.

The protein belongs to the PTH family. As to quaternary structure, monomer.

The protein localises to the cytoplasm. It catalyses the reaction an N-acyl-L-alpha-aminoacyl-tRNA + H2O = an N-acyl-L-amino acid + a tRNA + H(+). Hydrolyzes ribosome-free peptidyl-tRNAs (with 1 or more amino acids incorporated), which drop off the ribosome during protein synthesis, or as a result of ribosome stalling. Its function is as follows. Catalyzes the release of premature peptidyl moieties from peptidyl-tRNA molecules trapped in stalled 50S ribosomal subunits, and thus maintains levels of free tRNAs and 50S ribosomes. The chain is Peptidyl-tRNA hydrolase from Bartonella quintana (strain Toulouse) (Rochalimaea quintana).